A 393-amino-acid polypeptide reads, in one-letter code: DNA primase large subunit PriL (393 aa).

4 residues coordinate [4Fe-4S] cluster: Cys230, Cys339, Cys350, and Cys356.

This sequence belongs to the eukaryotic-type primase large subunit family. In terms of assembly, heterodimer of a small subunit (PriS) and a large subunit (PriL). The cofactor is [4Fe-4S] cluster.

Its function is as follows. Regulatory subunit of DNA primase, an RNA polymerase that catalyzes the synthesis of short RNA molecules used as primers for DNA polymerase during DNA replication. Stabilizes and modulates the activity of the small subunit, increasing the rate of DNA synthesis, and conferring RNA synthesis capability. The DNA polymerase activity may enable DNA primase to also catalyze primer extension after primer synthesis. May also play a role in DNA repair. Displays gap-filling and strand-displacement activities. This chain is DNA primase large subunit PriL, found in Pyrococcus abyssi (strain GE5 / Orsay).